A 308-amino-acid polypeptide reads, in one-letter code: PHO85 cyclin-2 (308 aa).

The Cyclin N-terminal domain occupies 18–146; that stretch reads EMVQYLASTT…LLEYFDWDVT (129 aa). The tract at residues 248-270 is disordered; sequence SPRTYNIDSKHDNKENRPIPTIK. Residues 255–264 are compositionally biased toward basic and acidic residues; sequence DSKHDNKENR.

The protein belongs to the cyclin family. PCL1,2 subfamily. Forms a cyclin-CDK complex with PHO85. Interacts with RVS167.

It localises to the cytoplasm. The protein resides in the nucleus. Its function is as follows. G1/S-specific cyclin partner of the cyclin-dependent kinase (CDK) PHO85. Essential for the control of the cell cycle at the G1/S (start) transition. Together with cyclin PCL1, positively controls degradation of sphingoid long chain base kinase LCB4. The PCL2-PHO85 cyclin-CDK holoenzyme phosphorylates LCB4, which is required for its ubiquitination and degradation. PCL2-PHO85 also phosphorylates RVS167, linking cyclin-CDK activity with organization of the actin cytoskeleton. This Saccharomyces cerevisiae (strain ATCC 204508 / S288c) (Baker's yeast) protein is PHO85 cyclin-2 (PCL2).